The following is a 78-amino-acid chain: Cytochrome b-c1 complex subunit 10, mitochondrial (78 aa).

At 1–26 (MVSYVKGPAYKALSHFGKLNAPLVRS) the chain is on the mitochondrial matrix side. A helical membrane pass occupies residues 27-46 (YIPNLVFWGAAAGGAVATFT). The Mitochondrial intermembrane portion of the chain corresponds to 47-78 (EGVPLFQKTFYEKIPFFGQHWIYNPDPEDVPV).

This sequence belongs to the UQCR11/QCR10 family. Component of the ubiquinol-cytochrome c oxidoreductase (cytochrome b-c1 complex, complex III, CIII), a multisubunit enzyme composed of 10 subunits. The complex is composed of 3 respiratory subunits cytochrome b (COB), cytochrome c1 (CYT1) and Rieske protein (RIP1), 2 core protein subunits COR1 and QCR2, and 5 low-molecular weight protein subunits QCR6, QCR7, QCR8, QCR9 and QCR10. The complex exists as an obligatory dimer and forms supercomplexes (SCs) in the inner mitochondrial membrane with a monomer or a dimer of cytochrome c oxidase (complex IV, CIV), resulting in 2 different assemblies (supercomplexes III(2)IV and III(2)IV(2)).

Its subcellular location is the mitochondrion inner membrane. Component of the ubiquinol-cytochrome c oxidoreductase, a multisubunit transmembrane complex that is part of the mitochondrial electron transport chain which drives oxidative phosphorylation. The complex plays an important role in the uptake of multiple carbon sources present in different host niches. The protein is Cytochrome b-c1 complex subunit 10, mitochondrial of Candida albicans (strain SC5314 / ATCC MYA-2876) (Yeast).